Consider the following 727-residue polypeptide: Glucans biosynthesis glucosyltransferase H (727 aa).

The interval 17–41 is disordered; the sequence is GSAMPNERPGPMEPQSLSQMPEGFP. The next 6 helical transmembrane spans lie at 58–80, 95–117, 407–429, 457–479, 499–521, and 572–594; these read FFVVGGALLLSSFAIYEMGAVFS, FAINFCWIALAFCSGIAGFLLLL, GIMAYLSSPFWLLLILTGLMLAL, ALRLFYITMVVLFGPKIFGVLLL, VLFEVILSALIAPIMMFIHCGAV, and LLAWMSPALIGLWLAVPISAWTG.

Belongs to the glycosyltransferase 2 family. OpgH subfamily.

The protein resides in the cell inner membrane. Its pathway is glycan metabolism; osmoregulated periplasmic glucan (OPG) biosynthesis. Its function is as follows. Involved in the biosynthesis of osmoregulated periplasmic glucans (OPGs). This chain is Glucans biosynthesis glucosyltransferase H, found in Shewanella oneidensis (strain ATCC 700550 / JCM 31522 / CIP 106686 / LMG 19005 / NCIMB 14063 / MR-1).